The primary structure comprises 1013 residues: Probable beta-galactosidase B (1013 aa).

A signal peptide spans 1-21; sequence MTRILNCLLVLLACLGVSSKA. A substrate-binding site is contributed by Tyr90. A glycan (N-linked (GlcNAc...) asparagine) is linked at Asn100. Residues Asn135, Ala136, Glu137, and Asn195 each contribute to the substrate site. Glu196 acts as the Proton donor in catalysis. A glycan (N-linked (GlcNAc...) asparagine) is linked at Asn211. Tyr265 is a binding site for substrate. Cys271 and Cys324 are joined by a disulfide. Glu308 acts as the Nucleophile in catalysis. Tyr373 contacts substrate. 7 N-linked (GlcNAc...) asparagine glycosylation sites follow: Asn411, Asn442, Asn456, Asn626, Asn735, Asn768, and Asn775.

This sequence belongs to the glycosyl hydrolase 35 family.

The protein resides in the secreted. The enzyme catalyses Hydrolysis of terminal non-reducing beta-D-galactose residues in beta-D-galactosides.. Functionally, cleaves beta-linked terminal galactosyl residues from gangliosides, glycoproteins, and glycosaminoglycans. This is Probable beta-galactosidase B (lacB) from Penicillium rubens (strain ATCC 28089 / DSM 1075 / NRRL 1951 / Wisconsin 54-1255) (Penicillium chrysogenum).